Reading from the N-terminus, the 137-residue chain is MRPQQAPVSGKVFIQRDYSSGTRCQFQTKFPAELENRVDRQQFEETVRTLNNLYAEAEKLGGQSYLEGCLACLTAYTIFLCMETHYEKVLKKVSKYIQEQNEKIYAPQGLLLTDPIERGLRVIEITIYEDRGVSSGR.

S-palmitoyl cysteine attachment occurs at residues cysteine 69 and cysteine 72.

It belongs to the ERF4 family. In terms of assembly, interacts with GOLGA3. Interacts with ZDHHC9. In terms of processing, palmitoylated on Cys-69 and Cys-72; which is required for Golgi localization and interaction with GOLGA3.

It is found in the golgi apparatus membrane. Its function is as follows. May be involved in protein transport from Golgi to cell surface. The ZDHHC9-GOLGA7 complex is a palmitoyltransferase specific for HRAS and NRAS. In Rattus norvegicus (Rat), this protein is Golgin subfamily A member 7 (Golga7).